The sequence spans 793 residues: Sucrose synthase (793 aa).

The GT-B glycosyltransferase stretch occupies residues 263–742 (MISRILIVSI…ALARVAERYT (480 aa)).

Belongs to the glycosyltransferase 1 family. Homotetramer.

The catalysed reaction is an NDP-alpha-D-glucose + D-fructose = a ribonucleoside 5'-diphosphate + sucrose + H(+). It carries out the reaction ADP-alpha-D-glucose + D-fructose = sucrose + ADP + H(+). In terms of biological role, catalyzes the reversible conversion of sucrose and a nucleotide disphosphate (NDP) into fructose and NDP-glucose; although the reaction is freely reversible in vitro, the physiological reaction seems to be sucrose cleavage. Unlike characterized plant enzymes prefers ADP as a cosubstrate, whereas plants prefer UDP. The KM for sucrose is 45-fold lower in the presence of ADP than UDP. Its preference for ADP over UDP suggests it may directly link sucrose and glycogen metabolism. The sequence is that of Sucrose synthase from Acidithiobacillus caldus (strain ATCC 51756 / DSM 8584 / KU).